The sequence spans 309 residues: MITIIGSGRVGTAAAVIMGLMKLDNKILLIDIVKGLPQGEALDMNHMSSILGLDVEYVGSNEYKDIEGSDLIIVTAGLPRKPGMTREQLLEANAKIVAEIGREIKKYAPDSIVILTTNPLDAMTYVMWKATGFPRERVIGFSGVLDAGRLAFYAAKKLGISPASILPIVLGQHGESMFPVPSKSYVHGVPLSKLLTEEQLKEVVEETVKAGARITELRGFSSNWGPGAGLAIMAEAVKRDAKRALIASVVLQGEYGVRDVPVEVPIILGRSGVVKVLEVELTEEERQKFMQSVEAVKKLVASVPPSYLQ.

Residues 6–11 (GSGRVG) and Asp-31 contribute to the NAD(+) site. Positions 80 and 86 each coordinate substrate. NAD(+) contacts are provided by residues Asn-93 and 116–118 (TTN). Substrate contacts are provided by Asn-118 and Arg-149. His-173 acts as the Proton acceptor in catalysis.

This sequence belongs to the LDH/MDH superfamily.

The catalysed reaction is (S)-malate + NAD(+) = oxaloacetate + NADH + H(+). Its function is as follows. Catalyzes the reversible oxidation of malate to oxaloacetate. The sequence is that of Malate dehydrogenase (mdh) from Pyrobaculum aerophilum (strain ATCC 51768 / DSM 7523 / JCM 9630 / CIP 104966 / NBRC 100827 / IM2).